We begin with the raw amino-acid sequence, 382 residues long: LIM homeobox transcription factor 1-alpha (382 aa).

LIM zinc-binding domains are found at residues 33–92 (SVCE…LFAV) and 92–154 (VKCG…EREL). Disordered regions lie at residues 161 to 208 (AASD…QQRR) and 252 to 285 (KLARRQQQQQQDQQNTQRLSSAQTNGGGSAGMEG). Residues 195–254 (PKRPRTILTTQQRRAFKASFEVSSKPCRKVRETLAAETGLSVRVVQVWFQNQRAKMKKLA) constitute a DNA-binding region (homeobox). Low complexity predominate over residues 256–269 (RQQQQQQDQQNTQR).

Isoform 1 is expressed in many tissues. Not found in heart, liver, spleen and testis. Relatively highly expressed in fetal brain. Isoform LMX1A-4AB is expressed in testis.

It localises to the nucleus. Functionally, acts as a transcriptional activator by binding to an A/T-rich sequence, the FLAT element, in the insulin gene promoter. Required for development of the roof plate and, in turn, for specification of dorsal cell fates in the CNS and developing vertebrae. This chain is LIM homeobox transcription factor 1-alpha (LMX1A), found in Homo sapiens (Human).